Reading from the N-terminus, the 258-residue chain is Phosphate import ATP-binding protein PstB (258 aa).

Residues isoleucine 13 to isoleucine 253 form the ABC transporter domain. ATP is bound at residue glycine 45–serine 52.

The protein belongs to the ABC transporter superfamily. Phosphate importer (TC 3.A.1.7) family. In terms of assembly, the complex is composed of two ATP-binding proteins (PstB), two transmembrane proteins (PstC and PstA) and a solute-binding protein (PstS).

It is found in the cell membrane. The enzyme catalyses phosphate(out) + ATP + H2O = ADP + 2 phosphate(in) + H(+). Functionally, part of the ABC transporter complex PstSACB involved in phosphate import. Responsible for energy coupling to the transport system. The sequence is that of Phosphate import ATP-binding protein PstB from Methanosarcina barkeri (strain Fusaro / DSM 804).